A 984-amino-acid polypeptide reads, in one-letter code: MORC family CW-type zinc finger protein 1 (984 aa).

The stretch at Ala-284–Ser-353 forms a coiled coil. The CW-type zinc finger occupies Ala-477–Ser-531. Zn(2+)-binding residues include Cys-486, Cys-489, Cys-512, and Cys-523. 2 coiled-coil regions span residues Asp-737 to Val-761 and Glu-900 to Gly-934.

The protein localises to the nucleus. In terms of biological role, required for spermatogenesis. Essential for de novo DNA methylation and silencing of transposable elements in the male embryonic germ cells. The chain is MORC family CW-type zinc finger protein 1 from Homo sapiens (Human).